The primary structure comprises 80 residues: U1-nemetoxin-Csp1a (80 aa).

A signal peptide spans 1–20; that stretch reads MKYFVVFCVLIIAVAAFTSA. The propeptide occupies 21–41; sequence AEDGEVFEENPLEFPKTIQKR. Cystine bridges form between Cys42–Cys56, Cys49–Cys60, Cys55–Cys77, and Cys66–Cys73.

The protein belongs to the neurotoxin 13 (insecticidal toxin ABC) family. 02 (Calisoga) subfamily. Expressed by the venom gland.

It localises to the secreted. In terms of biological role, causes paralysis to insect larvae (H.virescens). This toxin is active only on insects. The polypeptide is U1-nemetoxin-Csp1a (Calisoga sp. (Spider)).